The primary structure comprises 111 residues: MAKDIGLNVKAPKTECNDPQCPFHGSLAVRGQIFEGTVVSAKMSKSVVVSREYLKRDLKYDRYEKRRSKLHAHNPPCINAKEGDKVVIAECRPLSKTKTFVVVEVAGHESN.

It belongs to the universal ribosomal protein uS17 family. In terms of assembly, part of the 30S ribosomal subunit.

Functionally, one of the primary rRNA binding proteins, it binds specifically to the 5'-end of 16S ribosomal RNA. This chain is Small ribosomal subunit protein uS17, found in Methanocella arvoryzae (strain DSM 22066 / NBRC 105507 / MRE50).